A 311-amino-acid chain; its full sequence is Porphobilinogen deaminase (311 aa).

The residue at position 241 (C241) is an S-(dipyrrolylmethanemethyl)cysteine.

The protein belongs to the HMBS family. As to quaternary structure, monomer. Requires dipyrromethane as cofactor.

The enzyme catalyses 4 porphobilinogen + H2O = hydroxymethylbilane + 4 NH4(+). It participates in porphyrin-containing compound metabolism; protoporphyrin-IX biosynthesis; coproporphyrinogen-III from 5-aminolevulinate: step 2/4. Its function is as follows. Tetrapolymerization of the monopyrrole PBG into the hydroxymethylbilane pre-uroporphyrinogen in several discrete steps. The sequence is that of Porphobilinogen deaminase from Geobacillus sp. (strain WCH70).